The primary structure comprises 164 residues: Peptidyl-prolyl cis-trans isomerase A (164 aa).

N-acetylmethionine is present on M1. Residue V2 is modified to N-acetylvaline; in Peptidyl-prolyl cis-trans isomerase A, N-terminally processed. One can recognise a PPIase cyclophilin-type domain in the interval 7–163; sequence FFDIAVDGEP…KKITIANCGQ (157 aa). The residue at position 28 (K28) is an N6-acetyllysine; alternate. K28 is covalently cross-linked (Glycyl lysine isopeptide (Lys-Gly) (interchain with G-Cter in SUMO2); alternate). K28 participates in a covalent cross-link: Glycyl lysine isopeptide (Lys-Gly) (interchain with G-Cter in ubiquitin); alternate. 2 positions are modified to N6-acetyllysine: K44 and K76. S77 carries the phosphoserine modification. K82 bears the N6-acetyllysine; alternate mark. A Glycyl lysine isopeptide (Lys-Gly) (interchain with G-Cter in SUMO2); alternate cross-link involves residue K82. Phosphothreonine is present on T93. N108 carries N-linked (GlcNAc...) asparagine glycosylation. Residues K125 and K133 each carry the N6-acetyllysine modification.

This sequence belongs to the cyclophilin-type PPIase family. PPIase A subfamily. In terms of assembly, interacts with protein phosphatase PPP3CA/calcineurin A. Interacts with isoform 2 of BSG/CD147. Interacts with FOXO1; the interaction promotes FOXO1 dephosphorylation, nuclear accumulation and transcriptional activity. Interacts with integrin ITGA2B:ITGB3; the interaction is ROS and peptidyl-prolyl cis-trans isomerase (PPIase) activity-dependent and is increased in the presence of thrombin. Interacts with MAP3K5. Interacts with TARDBP; the interaction is dependent on the RNA-binding activity of TARDBP and the PPIase activity of PPIA/CYPA and the acetylation of PPIA/CYPA at Lys-125 favors the interaction. Interacts with HNRNPA1, HNRNPA2B1, HNRNPC, RBMX, HNRNPK and HNRNPM. Post-translationally, acetylation at Lys-125 markedly inhibits catalysis of cis to trans isomerization. PPIA acetylation also antagonizes the immunosuppressive effects of cyclosporine by inhibiting the sequential steps of cyclosporine binding and calcineurin inhibition. Acetylation at Lys-125 favors the interaction with TARDBP.

Its subcellular location is the cytoplasm. The protein localises to the secreted. It is found in the nucleus. The enzyme catalyses [protein]-peptidylproline (omega=180) = [protein]-peptidylproline (omega=0). Its activity is regulated as follows. Binds cyclosporin A (CsA). CsA mediates some of its effects via an inhibitory action on PPIase. Functionally, catalyzes the cis-trans isomerization of proline imidic peptide bonds in oligopeptides. Exerts a strong chemotactic effect on leukocytes partly through activation of one of its membrane receptors BSG/CD147, initiating a signaling cascade that culminates in MAPK/ERK activation. Activates endothelial cells (ECs) in a proinflammatory manner by stimulating activation of NF-kappa-B and ERK, JNK and p38 MAP-kinases and by inducing expression of adhesion molecules including SELE and VCAM1. Induces apoptosis in ECs by promoting the FOXO1-dependent expression of CCL2 and BCL2L11 which are involved in EC chemotaxis and apoptosis. In response to oxidative stress, initiates proapoptotic and antiapoptotic signaling in ECs via activation of NF-kappa-B and AKT1 and up-regulation of antiapoptotic protein BCL2. Negatively regulates MAP3K5/ASK1 kinase activity, autophosphorylation and oxidative stress-induced apoptosis mediated by MAP3K5/ASK1. Necessary for the assembly of TARDBP in heterogeneous nuclear ribonucleoprotein (hnRNP) complexes and regulates TARDBP binding to RNA UG repeats and TARDBP-dependent expression of HDAC6, ATG7 and VCP which are involved in clearance of protein aggregates. Plays an important role in platelet activation and aggregation. Regulates calcium mobilization and integrin ITGA2B:ITGB3 bidirectional signaling via increased ROS production as well as by facilitating the interaction between integrin and the cell cytoskeleton. Binds heparan sulfate glycosaminoglycans. The chain is Peptidyl-prolyl cis-trans isomerase A (PPIA) from Oryctolagus cuniculus (Rabbit).